The primary structure comprises 109 residues: MNIERLTTLQPVWDRYDTQIHNQKDNDNEVPVHQVSYTNLAEMVGEMNKLLEPSQVHLKFELHDKLNEYYVKVIEDSTNEVIREIPPKRWLDFYAAMTEFLGLFVDEKK.

This is an uncharacterized protein from Bacillus subtilis (strain 168).